We begin with the raw amino-acid sequence, 484 residues long: L-carnitine dehydrogenase/betainyl-CoA thioesterase (484 aa).

Positions Met-1–Lys-322 are L-carnitine dehydrogenase. Position 7–12 (Gly-7–Gly-12) interacts with NAD(+). A betainyl-CoA thioesterase region spans residues Val-323–Ala-484.

In the N-terminal section; belongs to the 3-hydroxyacyl-CoA dehydrogenase family. L-carnitine dehydrogenase subfamily. This sequence in the C-terminal section; belongs to the betainyl-CoA thioesterase family. Homodimer.

The protein resides in the cytoplasm. The enzyme catalyses carnitine + NAD(+) = 3-dehydrocarnitine + NADH + H(+). It catalyses the reaction N,N,N-trimethylglycyl-CoA + H2O = glycine betaine + CoA + H(+). Its pathway is amine and polyamine metabolism; carnitine metabolism. Multifunctional enzyme that catalyzes the NAD(+)-dependent oxidation of L-carnitine to 3-dehydrocarnitine and the cleavage of betainyl-CoA (N,N,N-trimethylglycyl-CoA) into glycine betaine and coenzyme A. This Agrobacterium fabrum (strain C58 / ATCC 33970) (Agrobacterium tumefaciens (strain C58)) protein is L-carnitine dehydrogenase/betainyl-CoA thioesterase.